We begin with the raw amino-acid sequence, 206 residues long: Small ribosomal subunit protein uS4A (206 aa).

An S4 RNA-binding domain is found at 98 to 163 (MRLDNVVYRL…SERFKMFAEN (66 aa)).

The protein belongs to the universal ribosomal protein uS4 family. Part of the 30S ribosomal subunit. Contacts protein S5. The interaction surface between S4 and S5 is involved in control of translational fidelity.

In terms of biological role, one of the primary rRNA binding proteins, it binds directly to 16S rRNA where it nucleates assembly of the body of the 30S subunit. With S5 and S12 plays an important role in translational accuracy. The protein is Small ribosomal subunit protein uS4A of Clostridium perfringens (strain SM101 / Type A).